The primary structure comprises 364 residues: 1-acyl-sn-glycerol-3-phosphate acyltransferase epsilon (364 aa).

2 helical membrane passes run 15-35 (LLPS…WGVW) and 61-81 (MVLF…GDLP). Residues 93 to 98 (HQSTVD) carry the HXXXXD motif motif. The helical transmembrane segment at 344–364 (LYVNTWIYGTLLGCLWVTIKA) threads the bilayer.

The protein belongs to the 1-acyl-sn-glycerol-3-phosphate acyltransferase family. Widely expressed.

The protein resides in the endoplasmic reticulum membrane. It localises to the nucleus envelope. Its subcellular location is the mitochondrion. It catalyses the reaction a 1-acyl-sn-glycero-3-phosphate + an acyl-CoA = a 1,2-diacyl-sn-glycero-3-phosphate + CoA. It carries out the reaction 1-(9Z-octadecenoyl)-sn-glycero-3-phosphate + tetradecanoyl-CoA = 1-(9Z)-octadecenoyl-2-tetradecanoyl-sn-glycero-3-phosphate + CoA. The catalysed reaction is pentadecanoyl-CoA + 1-(9Z-octadecenoyl)-sn-glycero-3-phosphate = 1-(9Z)-octadecenoyl-2-pentadecanoyl-sn-glycero-3-phosphate + CoA. The enzyme catalyses 1-(9Z-octadecenoyl)-sn-glycero-3-phosphate + octadecanoyl-CoA = 1-(9Z-octadecenoyl)-2-octadecanoyl-sn-glycero-3-phosphate + CoA. It catalyses the reaction nonadecanoyl-CoA + 1-(9Z-octadecenoyl)-sn-glycero-3-phosphate = 1-(9Z)-octadecenoyl-2-nonadecanoyl-sn-glycero-3-phosphate + CoA. It carries out the reaction 1-(9Z-octadecenoyl)-sn-glycero-3-phosphoethanolamine + (9Z)-octadecenoyl-CoA = 1,2-di-(9Z-octadecenoyl)-sn-glycero-3-phosphoethanolamine + CoA. The catalysed reaction is 1-(9Z-octadecenoyl)-sn-glycero-3-phosphocholine + (9Z)-octadecenoyl-CoA = 1,2-di-(9Z-octadecenoyl)-sn-glycero-3-phosphocholine + CoA. The enzyme catalyses 1-(9Z-octadecenoyl)-sn-glycero-3-phospho-(1D-myo-inositol) + (5Z,8Z,11Z,14Z)-eicosatetraenoyl-CoA = 1-(9Z-octadecenoyl)-2-(5Z,8Z,11Z,14Z-eicosatetraenoyl)-sn-glycero-3-phospho-1D-myo-inositol + CoA. It catalyses the reaction 1-(9Z-octadecenoyl)-sn-glycero-3-phospho-L-serine + (9Z)-octadecenoyl-CoA = 1,2-di-(9Z)-octadecenoyl-sn-glycero-3-phospho-L-serine + CoA. It carries out the reaction 1-(9Z-octadecenoyl)-sn-glycero-3-phospho-L-serine + (5Z,8Z,11Z,14Z)-eicosatetraenoyl-CoA = 1-(9Z-octadecenoyl)-2-(5Z,8Z,11Z,14Z-eicosatetraenoyl)-sn-glycero-3-phospho-L-serine + CoA. The catalysed reaction is 1-hexadecanoyl-sn-glycero-3-phosphate + (9Z)-octadecenoyl-CoA = 1-hexadecanoyl-2-(9Z-octadecenoyl)-sn-glycero-3-phosphate + CoA. The enzyme catalyses 1-heptadecanoyl-sn-glycero-3-phosphate + (9Z)-octadecenoyl-CoA = 1-heptadecanoyl-2-(9Z)-octadecenoyl-sn-glycero-3-phosphate + CoA. It catalyses the reaction 1-(5Z,8Z,11Z,14Z-eicosatetraenoyl)-sn-glycero-3-phosphate + (9Z)-octadecenoyl-CoA = 1-(5Z,8Z,11Z,14Z)-eicosatetraenoyl-2-(9Z)-octadecenoyl-sn-glycero-3-phosphate + CoA. It carries out the reaction 1-octadecanoyl-sn-glycero-3-phosphate + (9Z)-octadecenoyl-CoA = 1-octadecanoyl-2-(9Z-octadecenoyl)-sn-glycero-3-phosphate + CoA. The catalysed reaction is 1-(9Z-octadecenoyl)-sn-glycero-3-phosphate + (5Z,8Z,11Z,14Z)-eicosatetraenoyl-CoA = 1-(9Z)-octadecenoyl-2-(5Z,8Z,11Z,14Z)-eicosatetraenoyl-sn-glycero-3-phosphate + CoA. The enzyme catalyses heptadecanoyl-CoA + 1-(9Z-octadecenoyl)-sn-glycero-3-phosphate = 1-(9Z)-octadecenoyl-2-heptadecanoyl-sn-glycero-3-phosphate + CoA. It catalyses the reaction 1-(9Z-octadecenoyl)-sn-glycero-3-phosphocholine + (5Z,8Z,11Z,14Z)-eicosatetraenoyl-CoA = 1-(9Z)-octadecenoyl-2-(5Z,8Z,11Z,14Z)-icosatetraenoyl-sn-glycero-3-phosphocholine + CoA. It carries out the reaction 1-(9Z-octadecenoyl)-sn-glycero-3-phosphate + (9Z)-octadecenoyl-CoA = 1,2-di-(9Z-octadecenoyl)-sn-glycero-3-phosphate + CoA. The catalysed reaction is 1-(9Z-octadecenoyl)-sn-glycero-3-phosphate + hexadecanoyl-CoA = 1-hexadecanoyl-2-(9Z-octadecenoyl)-sn-glycero-3-phosphate + CoA. Its pathway is phospholipid metabolism; CDP-diacylglycerol biosynthesis; CDP-diacylglycerol from sn-glycerol 3-phosphate: step 2/3. Its function is as follows. Converts 1-acyl-sn-glycerol-3-phosphate (lysophosphatidic acid or LPA) into 1,2-diacyl-sn-glycerol-3-phosphate (phosphatidic acid or PA) by incorporating an acyl moiety at the sn-2 position of the glycerol backbone. Acts on LPA containing saturated or unsaturated fatty acids C15:0-C20:4 at the sn-1 position using C18:1-CoA as the acyl donor. Also acts on lysophosphatidylethanolamine using oleoyl-CoA, but not arachidonoyl-CoA, and lysophosphatidylinositol using arachidonoyl-CoA, but not oleoyl-CoA. Activity toward lysophosphatidylglycerol not detectable. The chain is 1-acyl-sn-glycerol-3-phosphate acyltransferase epsilon (AGPAT5) from Homo sapiens (Human).